A 1193-amino-acid chain; its full sequence is Protein diaphanous homolog 3 (1193 aa).

The segment covering 1 to 10 (MERHQPRLHH) has biased composition (basic residues). Residues 1–57 (MERHQPRLHHPAQGSAAGTPYPSSASLRGCRESKMPRRKGPQHPPPPSGPEEPGEKR) are disordered. Serine 26 is modified (phosphoserine). Positions 36-60 (PRRKGPQHPPPPSGPEEPGEKRPKF) match the Nuclear localization signal motif. Residue threonine 68 is modified to Phosphothreonine. Phosphoserine is present on residues serine 77 and serine 175. The region spanning 114 to 476 (PKPLSENELL…QIVLHRDGMD (363 aa)) is the GBD/FH3 domain. A coiled-coil region spans residues 497–554 (IDQAKLEEFEEKASELYKKFEKEFTDHQETQAELQKKEAKINELQAELQAFKSQFGAL). The interval 558 to 622 (CNIPLPPSKE…PPPLGFLGGQ (65 aa)) is disordered. The region spanning 561–631 (PLPPSKEGGT…QNSPPLPILP (71 aa)) is the FH1 domain. A compositionally biased stretch (pro residues) spans 575–600 (LPPPPPLPSGGGVPPPPPPPPPPPLP). Position 624 is a phosphoserine (serine 624). The FH2 domain occupies 636–1034 (PKKEFKPEIS…EKRVRIAKEL (399 aa)). Residues 1013-1056 (KENIKKREAEEKEKRVRIAKELAERERLERQQKKKRLLEMKTEG) adopt a coiled-coil conformation. The region spanning 1057-1087 (DETGVMDNLLEALQSGAAFRDRRKRTPMPKD) is the DAD domain. A phosphoserine mark is found at serine 1093 and serine 1179. The short motif at 1184 to 1193 (EALLARLRAL) is the Nuclear export signal element.

The protein belongs to the formin homology family. Diaphanous subfamily. In terms of processing, ubiquitinated.

The protein resides in the cytoplasm. Its subcellular location is the nucleus. Its function is as follows. Actin nucleation and elongation factor required for the assembly of F-actin structures, such as actin cables and stress fibers. Required for cytokinesis, stress fiber formation and transcriptional activation of the serum response factor. Binds to GTP-bound form of Rho and to profilin: acts in a Rho-dependent manner to recruit profilin to the membrane, where it promotes actin polymerization. DFR proteins couple Rho and Src tyrosine kinase during signaling and the regulation of actin dynamics. Also acts as an actin nucleation and elongation factor in the nucleus by promoting nuclear actin polymerization inside the nucleus to drive serum-dependent SRF-MRTFA activity. In Homo sapiens (Human), this protein is Protein diaphanous homolog 3 (DIAPH3).